The sequence spans 312 residues: Malate dehydrogenase (312 aa).

Residues 7–13 (GASGGIG) and D34 each bind NAD(+). Substrate contacts are provided by R81 and R87. NAD(+) contacts are provided by residues N94 and 117 to 119 (ITN). Residues N119 and R153 each coordinate substrate. Catalysis depends on H177, which acts as the Proton acceptor. NAD(+) is bound at residue M227.

This sequence belongs to the LDH/MDH superfamily. MDH type 1 family. Homodimer.

It catalyses the reaction (S)-malate + NAD(+) = oxaloacetate + NADH + H(+). In terms of biological role, catalyzes the reversible oxidation of malate to oxaloacetate. The protein is Malate dehydrogenase of Actinobacillus succinogenes (strain ATCC 55618 / DSM 22257 / CCUG 43843 / 130Z).